The following is a 316-amino-acid chain: Probable cobalamin biosynthesis protein CobD (316 aa).

5 helical membrane-spanning segments follow: residues Met-1–Leu-21, Ile-50–Leu-70, Ile-89–Ile-109, Pro-165–Phe-185, and Ile-294–Leu-314.

Belongs to the CobD/CbiB family.

It is found in the cell membrane. The protein operates within cofactor biosynthesis; adenosylcobalamin biosynthesis. Converts cobyric acid to cobinamide by the addition of aminopropanol on the F carboxylic group. This chain is Probable cobalamin biosynthesis protein CobD, found in Methanothrix thermoacetophila (strain DSM 6194 / JCM 14653 / NBRC 101360 / PT) (Methanosaeta thermophila).